Consider the following 2336-residue polypeptide: Voltage-dependent N-type calcium channel subunit alpha-1B (2336 aa).

The disordered stretch occupies residues Met1 to Leu37. Topologically, residues Met1–Arg90 are cytoplasmic. The span at Gly10 to Leu37 shows a compositional bias: gly residues. At Arg22 the chain carries Omega-N-methylarginine. The I repeat unit spans residues Asn82–Phe359. Residues Ile91–Leu114 traverse the membrane as a helical segment. Topologically, residues Glu115–Asp131 are extracellular. Residues Asp132–Leu152 traverse the membrane as a helical segment. The Cytoplasmic portion of the chain corresponds to Gly153 to Arg163. A helical membrane pass occupies residues Asn164–Ala182. At Gly183–Asp187 the chain is on the extracellular side. The helical transmembrane segment at Leu188–Val211 threads the bilayer. Residues Val212 to Val221 lie on the Cytoplasmic side of the membrane. The chain crosses the membrane as a helical span at residues Pro222 to Phe244. The Extracellular portion of the chain corresponds to Tyr245–Trp331. N-linked (GlcNAc...) asparagine glycosylation occurs at Asn256. The chain crosses the membrane as a helical span at residues Asn332–Ser356. The Cytoplasmic portion of the chain corresponds to Gly357–Gln483. Residues Gln379 to Glu396 form a binding to the beta subunit region. Phosphoserine is present on Ser411. Ala452–Thr459 contacts ATP. One copy of the II repeat lies at Glu469–Leu713. The helical transmembrane segment at Ser484–Met502 threads the bilayer. The Extracellular portion of the chain corresponds to Val503–Thr512. The chain crosses the membrane as a helical span at residues Thr513–Tyr535. Residues Gly536–Ser545 are Cytoplasmic-facing. Position 545 (Ser545) interacts with a 1,2-diacyl-sn-glycero-3-phospho-(1D-myo-inositol-4,5-bisphosphate). A helical membrane pass occupies residues Ser546–Ile567. The Extracellular segment spans residues Lys568 to Gly574. The helical transmembrane segment at Ile575–Phe587 threads the bilayer. A 1,2-diacyl-sn-glycero-3-phospho-(1D-myo-inositol-4,5-bisphosphate) contacts are provided by Arg585 and Lys588. Over Lys588–Asn605 the chain is Cytoplasmic. Residues Ser606–Leu631 traverse the membrane as a helical segment. The Extracellular segment spans residues Phe632–Gly683. A helical transmembrane segment spans residues Met684 to Val710. Residues Asp711–Tyr1149 are Cytoplasmic-facing. Phosphoserine is present on residues Ser746, Ser749, and Ser784. 2 disordered regions span residues Tyr800–Lys1021 and Glu1051–Val1076. 6 stretches are compositionally biased toward basic and acidic residues: residues Val806–Leu827, Glu870–Ala891, Gly920–Pro930, His938–Glu948, Gly970–Thr981, and Pro996–Lys1021. The segment covering Gln1059–Val1076 has biased composition (polar residues). Ser1067 bears the Phosphoserine mark. An III repeat occupies Asn1135–Phe1421. Residues Phe1150–Glu1168 form a helical membrane-spanning segment. The Extracellular segment spans residues Asp1169 to Phe1176. The chain crosses the membrane as a helical span at residues Arg1177–Ile1201. At Asp1202–Asp1215 the chain is on the cytoplasmic side. A helical membrane pass occupies residues Leu1216–Gly1240. The Extracellular portion of the chain corresponds to Ser1241–Ile1246. A helical membrane pass occupies residues Asn1247 to Leu1267. Topologically, residues Pro1268–Leu1285 are cytoplasmic. The helical transmembrane segment at Asn1286–Leu1305 threads the bilayer. Residues Phe1306–Met1392 are Extracellular-facing. A helical membrane pass occupies residues Glu1393–Ile1418. Topologically, residues Ile1419–Pro1473 are cytoplasmic. One copy of the IV repeat lies at Asn1458–Phe1711. A helical membrane pass occupies residues Pro1474 to Met1492. Residues Lys1493–Glu1500 lie on the Extracellular side of the membrane. The helical transmembrane segment at Tyr1501–Ile1525 threads the bilayer. The Cytoplasmic segment spans residues Ala1526 to Asp1535. The helical transmembrane segment at Ala1536 to Ile1557 threads the bilayer. Over Ala1558 to Asn1563 the chain is Extracellular. Residue Asn1563 is glycosylated (N-linked (GlcNAc...) asparagine). The helical transmembrane segment at Leu1564–Gly1582 threads the bilayer. Residues Tyr1583–Tyr1601 lie on the Cytoplasmic side of the membrane. A helical transmembrane segment spans residues Val1602–Phe1621. At Gly1622–Phe1683 the chain is on the extracellular side. N-linked (GlcNAc...) asparagine glycosylation is present at Asn1675. The chain crosses the membrane as a helical span at residues Ala1684 to Ile1707. Residues Met1708–Cys2336 are Cytoplasmic-facing. Positions His1724–Pro1759 constitute an EF-hand domain. Residues Asp1737, Arg1743, and Asp1748 each coordinate Ca(2+). Positions Thr1981–Thr2202 are disordered. The segment covering Ser2048–Lys2062 has biased composition (basic residues). Ser2065 carries the phosphoserine modification. A compositionally biased stretch (basic and acidic residues) spans Cys2097–Gln2113. Positions Gly2161 to Ser2177 are enriched in polar residues. A phosphoserine mark is found at Ser2221, Ser2230, and Ser2253.

This sequence belongs to the calcium channel alpha-1 subunit (TC 1.A.1.11) family. CACNA1B subfamily. In terms of assembly, multisubunit complex consisting of alpha-1, alpha-2, beta and delta subunits in a 1:1:1:1 ratio. The channel activity is directed by the pore-forming and voltage-sensitive alpha-1 subunit. In many cases, this subunit is sufficient to generate voltage-sensitive calcium channel activity. The auxiliary subunits beta and alpha-2/delta linked by a disulfide bridge regulate the channel activity. Interacts with RIMS1. Interacts with FMR1 (via C-terminus); this interaction induces a decrease in the number of presynaptic functional CACNA1B channels at the cell surface. In terms of processing, phosphorylated in vitro by CaM-kinase II, PKA, PKC and CGPK. As to expression, central nervous system.

Its subcellular location is the membrane. It carries out the reaction Ca(2+)(in) = Ca(2+)(out). Its activity is regulated as follows. Is specifically blocked by omega-conotoxin GVIA. Is specifically blocked by omega-conotoxin MVIIA (ziconotide). Is insensitive to dihydropyridines (DHP). Voltage-sensitive calcium channels (VSCC) mediate the entry of calcium ions into excitable cells and are also involved in a variety of calcium-dependent processes, including muscle contraction, hormone or neurotransmitter release, gene expression, cell motility, cell division and cell death. This alpha-1B subunit gives rise to N-type calcium currents. N-type calcium channels belong to the 'high-voltage activated' (HVA) group. They are involved in pain signaling. Calcium channels containing alpha-1B subunit may play a role in directed migration of immature neurons. Mediates Ca(2+) release probability at hippocampal neuronal soma and synaptic terminals. This Rattus norvegicus (Rat) protein is Voltage-dependent N-type calcium channel subunit alpha-1B (Cacna1b).